A 176-amino-acid chain; its full sequence is Large ribosomal subunit protein eL6 (176 aa).

The interval 1–27 is disordered; sequence MSQVAPKWYQSEDVPAPKQTRKTARPQ.

Belongs to the eukaryotic ribosomal protein eL6 family. Component of the large ribosomal subunit. Mature ribosomes consist of a small (40S) and a large (60S) subunit. The 40S subunit contains about 32 different proteins and 1 molecule of RNA (18S). The 60S subunit contains 45 different proteins and 3 molecules of RNA (25S, 5.8S and 5S).

The protein localises to the cytoplasm. Its function is as follows. Component of the ribosome, a large ribonucleoprotein complex responsible for the synthesis of proteins in the cell. The small ribosomal subunit (SSU) binds messenger RNAs (mRNAs) and translates the encoded message by selecting cognate aminoacyl-transfer RNA (tRNA) molecules. The large subunit (LSU) contains the ribosomal catalytic site termed the peptidyl transferase center (PTC), which catalyzes the formation of peptide bonds, thereby polymerizing the amino acids delivered by tRNAs into a polypeptide chain. The nascent polypeptides leave the ribosome through a tunnel in the LSU and interact with protein factors that function in enzymatic processing, targeting, and the membrane insertion of nascent chains at the exit of the ribosomal tunnel. The sequence is that of Large ribosomal subunit protein eL6 from Candida albicans (strain SC5314 / ATCC MYA-2876) (Yeast).